The chain runs to 558 residues: MFLDFMSEVEGILKEGLDRCGLSVPLENSLDLSPHADLSTTIAFRLSPVLRKDPKDVAAEIYNSMGSPSRWVDRAELVGPYINFYMSRNFLDNVVTKAQGEDAWWGRRSGSVVVEHTSANPDGPLHVGHIRNSVIGDTIVRILRRAGYNVEAQYYVNDMGRQTAMVVWGCDHLDLDDSKPDHAIARVYIAAHKIMNEKPELSAEVDELMRRYESRDPEIVKKFQRAARYAISGIERTLHRMNIHHDSYKWESEFVWDGSVDEILEMLERTGRTVLKDGALQLDLSEEGFEKSLVLRRADGTTLYTTRDLAYHKWKAENYERVVEVLGADHKLISAQLRTALRMLGIGEPEVVIFEFVSLPDGSMSTRRGKFISADELLDEVEKQAYLEVTKRRPEMDEEFRRDVAGKVAVGAVRYDIVRVSADKATTFDWKTALDFEKLSAPFIQYSHARACSIINKAGELDEFDPGLLRDDYEIALIKKIAEFDLVIERAARELKPHQLATYARELAERFNLFYRYDPVLDAKPVELRNARLGLVRASRNALSATLDTLGIDAPESM.

Positions 119–129 match the 'HIGH' region motif; the sequence is ANPDGPLHVGH.

The protein belongs to the class-I aminoacyl-tRNA synthetase family.

Its subcellular location is the cytoplasm. It carries out the reaction tRNA(Arg) + L-arginine + ATP = L-arginyl-tRNA(Arg) + AMP + diphosphate. The sequence is that of Arginine--tRNA ligase from Methanothrix thermoacetophila (strain DSM 6194 / JCM 14653 / NBRC 101360 / PT) (Methanosaeta thermophila).